The chain runs to 598 residues: UvrABC system protein C (598 aa).

The region spanning Ser-13 to Val-92 is the GIY-YIG domain. Residues Asp-206–Thr-241 form the UVR domain.

It belongs to the UvrC family. As to quaternary structure, interacts with UvrB in an incision complex.

It is found in the cytoplasm. Its function is as follows. The UvrABC repair system catalyzes the recognition and processing of DNA lesions. UvrC both incises the 5' and 3' sides of the lesion. The N-terminal half is responsible for the 3' incision and the C-terminal half is responsible for the 5' incision. This Chlamydia muridarum (strain MoPn / Nigg) protein is UvrABC system protein C.